The primary structure comprises 145 residues: D-aminoacyl-tRNA deacylase (145 aa).

The Gly-cisPro motif, important for rejection of L-amino acids motif lies at 137–138 (GP).

The protein belongs to the DTD family. As to quaternary structure, homodimer.

It is found in the cytoplasm. The enzyme catalyses glycyl-tRNA(Ala) + H2O = tRNA(Ala) + glycine + H(+). It carries out the reaction a D-aminoacyl-tRNA + H2O = a tRNA + a D-alpha-amino acid + H(+). An aminoacyl-tRNA editing enzyme that deacylates mischarged D-aminoacyl-tRNAs. Also deacylates mischarged glycyl-tRNA(Ala), protecting cells against glycine mischarging by AlaRS. Acts via tRNA-based rather than protein-based catalysis; rejects L-amino acids rather than detecting D-amino acids in the active site. By recycling D-aminoacyl-tRNA to D-amino acids and free tRNA molecules, this enzyme counteracts the toxicity associated with the formation of D-aminoacyl-tRNA entities in vivo and helps enforce protein L-homochirality. In Shewanella baltica (strain OS155 / ATCC BAA-1091), this protein is D-aminoacyl-tRNA deacylase.